Here is a 539-residue protein sequence, read N- to C-terminus: Eukaryotic translation initiation factor 3 subunit L (539 aa).

Residues 306 to 514 (TFSDILLYIQ…IHIADTKVSH (209 aa)) enclose the PCI domain.

It belongs to the eIF-3 subunit L family. In terms of assembly, component of the eukaryotic translation initiation factor 3 (eIF-3) complex. The eIF-3 complex interacts with pix.

It is found in the cytoplasm. Functionally, component of the eukaryotic translation initiation factor 3 (eIF-3) complex, which is involved in protein synthesis of a specialized repertoire of mRNAs and, together with other initiation factors, stimulates binding of mRNA and methionyl-tRNAi to the 40S ribosome. The eIF-3 complex specifically targets and initiates translation of a subset of mRNAs involved in cell proliferation. In Drosophila ananassae (Fruit fly), this protein is Eukaryotic translation initiation factor 3 subunit L.